Consider the following 64-residue polypeptide: Cytochrome c oxidase subunit 9, mitochondrial (64 aa).

Over Met-1–Arg-15 the chain is Mitochondrial matrix. A helical transmembrane segment spans residues Gly-16 to Trp-36. At Tyr-37–Ala-64 the chain is on the mitochondrial intermembrane side.

The protein belongs to the fungal cytochrome c oxidase subunit 7a family. As to quaternary structure, component of the cytochrome c oxidase (complex IV, CIV), a multisubunit enzyme composed of 11 subunits. The complex is composed of a catalytic core of 3 subunits Cox1, Cox2 and Cox3, encoded in the mitochondrial DNA, and 8 supernumerary subunits Cox4, Cox5a/Cox5, Cox6, Cox7, Cox8, Cox7a/Cox9, Cox6b/Cox12 and Cox6a/Cox13, which are encoded in the nuclear genome. The complex exists as a monomer or a dimer and forms respiratory supercomplexes (SCs) in the inner mitochondrial membrane with NADH-ubiquinone oxidoreductase (complex I, CI) and ubiquinol-cytochrome c oxidoreductase (cytochrome b-c1 complex, complex III, CIII), resulting in various different assemblies (supercomplexes I(1)IV(1), I(1)III(3)IV(2), III(2)IV(1) and III(2)IV(2) as well as larger supercomplexes of compositions like I(1)III(2)IV(5-6)).

It is found in the mitochondrion inner membrane. The protein operates within energy metabolism; oxidative phosphorylation. Component of the cytochrome c oxidase, the last enzyme in the mitochondrial electron transport chain which drives oxidative phosphorylation. The respiratory chain contains 3 multisubunit complexes succinate dehydrogenase (complex II, CII), ubiquinol-cytochrome c oxidoreductase (cytochrome b-c1 complex, complex III, CIII) and cytochrome c oxidase (complex IV, CIV), that cooperate to transfer electrons derived from NADH and succinate to molecular oxygen, creating an electrochemical gradient over the inner membrane that drives transmembrane transport and the ATP synthase. Cytochrome c oxidase is the component of the respiratory chain that catalyzes the reduction of oxygen to water. Electrons originating from reduced cytochrome c in the intermembrane space (IMS) are transferred via the dinuclear copper A center (CU(A)) of Cox2 and heme A of Cox1 to the active site in Cox1, a binuclear center (BNC) formed by heme A3 and copper B (CU(B)). The BNC reduces molecular oxygen to 2 water molecules using 4 electrons from cytochrome c in the IMS and 4 protons from the mitochondrial matrix. This chain is Cytochrome c oxidase subunit 9, mitochondrial (cox-17), found in Neurospora crassa (strain ATCC 24698 / 74-OR23-1A / CBS 708.71 / DSM 1257 / FGSC 987).